The chain runs to 237 residues: 1-(5-phosphoribosyl)-5-[(5-phosphoribosylamino)methylideneamino] imidazole-4-carboxamide isomerase (237 aa).

The active-site Proton acceptor is D8. D129 functions as the Proton donor in the catalytic mechanism.

The protein belongs to the HisA/HisF family.

Its subcellular location is the cytoplasm. It carries out the reaction 1-(5-phospho-beta-D-ribosyl)-5-[(5-phospho-beta-D-ribosylamino)methylideneamino]imidazole-4-carboxamide = 5-[(5-phospho-1-deoxy-D-ribulos-1-ylimino)methylamino]-1-(5-phospho-beta-D-ribosyl)imidazole-4-carboxamide. It participates in amino-acid biosynthesis; L-histidine biosynthesis; L-histidine from 5-phospho-alpha-D-ribose 1-diphosphate: step 4/9. The polypeptide is 1-(5-phosphoribosyl)-5-[(5-phosphoribosylamino)methylideneamino] imidazole-4-carboxamide isomerase (Methanosphaera stadtmanae (strain ATCC 43021 / DSM 3091 / JCM 11832 / MCB-3)).